A 451-amino-acid chain; its full sequence is Cysteine protease ATG4 (451 aa).

The Nucleophile role is filled by Cys122. Catalysis depends on residues Asp297 and His299.

This sequence belongs to the peptidase C54 family. As to quaternary structure, interacts with ATG8.

The protein localises to the cytoplasm. It localises to the nucleus. The protein resides in the preautophagosomal structure. The enzyme catalyses [protein]-C-terminal L-amino acid-glycyl-phosphatidylethanolamide + H2O = [protein]-C-terminal L-amino acid-glycine + a 1,2-diacyl-sn-glycero-3-phosphoethanolamine. Cysteine protease that plays a key role in cytoplasm to vacuole transport (Cvt) and autophagy by mediating both proteolytic activation and delipidation of ATG8. Required for selective autophagic degradation of the nucleus (nucleophagy) as well as for mitophagy which contributes to regulate mitochondrial quantity and quality by eliminating the mitochondria to a basal level to fulfill cellular energy requirements and preventing excess ROS production. The protease activity is required for proteolytic activation of ATG8: cleaves the C-terminal amino acid of ATG8 to reveal a C-terminal glycine. ATG8 ubiquitin-like activity requires the exposure of the glycine at the C-terminus for its conjugation to phosphatidylethanolamine (PE) and its insertion to membranes, which is necessary for autophagy. The ATG8-PE conjugate mediates tethering between adjacent membranes and stimulates membrane hemifusion, leading to expansion of the autophagosomal membrane during autophagy. In addition to the protease activity, also catalyzes deconjugation of PE-conjugated forms of ATG8 during macroautophagy: ATG8 delipidation is required to release the protein from membranes, which facilitates multiple events during macroautophagy, and especially for efficient autophagosome biogenesis, the assembly of ATG9-containing tubulovesicular clusters into phagophores/autophagosomes, and for the disassembly of PAS-associated ATG components. ATG8 delipidation by ATG4 also recycles ATG8-PE generated on inappropriate membranes to maintain a reservoir of unlipidated ATG8 that is required for autophagosome formation at the PAS. The chain is Cysteine protease ATG4 from Kluyveromyces marxianus (strain DMKU3-1042 / BCC 29191 / NBRC 104275) (Yeast).